A 460-amino-acid chain; its full sequence is Bifunctional protein GlmU (460 aa).

The segment at 1-232 is pyrophosphorylase; it reads MALNVVILAA…AIEVEGANNR (232 aa). UDP-N-acetyl-alpha-D-glucosamine is bound by residues 8–11, K22, Q73, 78–79, 100–102, G137, E157, N172, and N230; these read LAAG, GT, and YGD. Position 102 (D102) interacts with Mg(2+). Residue N230 coordinates Mg(2+). The segment at 233-253 is linker; the sequence is VQLAQLERAYQAREAEKLMLA. The N-acetyltransferase stretch occupies residues 254–460; that stretch reads GANLRDPSRI…GWQRPVKIKK (207 aa). UDP-N-acetyl-alpha-D-glucosamine-binding residues include R336 and K354. The active-site Proton acceptor is the H366. UDP-N-acetyl-alpha-D-glucosamine-binding residues include Y369 and N380. Acetyl-CoA contacts are provided by residues A383, 389-390, S408, A426, and R443; that span reads NY.

This sequence in the N-terminal section; belongs to the N-acetylglucosamine-1-phosphate uridyltransferase family. In the C-terminal section; belongs to the transferase hexapeptide repeat family. Homotrimer. Mg(2+) is required as a cofactor.

The protein resides in the cytoplasm. The catalysed reaction is alpha-D-glucosamine 1-phosphate + acetyl-CoA = N-acetyl-alpha-D-glucosamine 1-phosphate + CoA + H(+). The enzyme catalyses N-acetyl-alpha-D-glucosamine 1-phosphate + UTP + H(+) = UDP-N-acetyl-alpha-D-glucosamine + diphosphate. Its pathway is nucleotide-sugar biosynthesis; UDP-N-acetyl-alpha-D-glucosamine biosynthesis; N-acetyl-alpha-D-glucosamine 1-phosphate from alpha-D-glucosamine 6-phosphate (route II): step 2/2. It functions in the pathway nucleotide-sugar biosynthesis; UDP-N-acetyl-alpha-D-glucosamine biosynthesis; UDP-N-acetyl-alpha-D-glucosamine from N-acetyl-alpha-D-glucosamine 1-phosphate: step 1/1. The protein operates within bacterial outer membrane biogenesis; LPS lipid A biosynthesis. Functionally, catalyzes the last two sequential reactions in the de novo biosynthetic pathway for UDP-N-acetylglucosamine (UDP-GlcNAc). The C-terminal domain catalyzes the transfer of acetyl group from acetyl coenzyme A to glucosamine-1-phosphate (GlcN-1-P) to produce N-acetylglucosamine-1-phosphate (GlcNAc-1-P), which is converted into UDP-GlcNAc by the transfer of uridine 5-monophosphate (from uridine 5-triphosphate), a reaction catalyzed by the N-terminal domain. This chain is Bifunctional protein GlmU, found in Shewanella baltica (strain OS195).